The following is a 427-amino-acid chain: Terminal nucleotidyltransferase 5B (427 aa).

The span at 1–11 shows a compositional bias: acidic residues; sequence MMPSESGDESL. The tract at residues 1 to 46 is disordered; the sequence is MMPSESGDESLEQPAAQVGTGAASAVATAGAAGGGPDLEASSASLG. Residues 15–30 are compositionally biased toward low complexity; sequence AAQVGTGAASAVATAG.

It belongs to the TENT family.

Its subcellular location is the cytoplasm. The protein localises to the nucleus. The enzyme catalyses RNA(n) + ATP = RNA(n)-3'-adenine ribonucleotide + diphosphate. Functionally, catalyzes the transfer of one adenosine molecule from an ATP to an mRNA poly(A) tail bearing a 3'-OH terminal group in an ATP hydrolysis-dependent manner. May be involved in maintaining the translation efficiency of at least some genes through preventing degradation of their mRNAs. Prefers RNA molecules that are adenosine-rich close to 3'-end. In addition, may inhibit cell proliferation and cell cycle progression through ubiquitination of beta-catenin/CTNNB1. The polypeptide is Terminal nucleotidyltransferase 5B (Rattus norvegicus (Rat)).